We begin with the raw amino-acid sequence, 133 residues long: FPRL1 inhibitory protein (133 aa).

The signal sequence occupies residues 1–28 (MKKNITKTIIASTVIAAGLLTQTNDAKA).

This sequence belongs to the CHIPS/FLIPr family.

Its subcellular location is the secreted. Its function is as follows. May be involved in countering the first line of host defense mechanisms. Impairs the leukocyte response to FPRL1 agonists by binding directly to host FPRL1. Exerts, in vitro, anti-inflammatory activity by inhibiting calcium mobilization and cell migration toward chemoattractants. In Staphylococcus aureus (strain Newman), this protein is FPRL1 inhibitory protein (flr).